We begin with the raw amino-acid sequence, 80 residues long: Exodeoxyribonuclease 7 small subunit (80 aa).

The interval 60–80 is disordered; the sequence is LIDSDGTEHNLDPNNASAPEE. The segment covering 61-70 has biased composition (basic and acidic residues); sequence IDSDGTEHNL. The span at 71–80 shows a compositional bias: polar residues; sequence DPNNASAPEE.

This sequence belongs to the XseB family. Heterooligomer composed of large and small subunits.

It is found in the cytoplasm. The catalysed reaction is Exonucleolytic cleavage in either 5'- to 3'- or 3'- to 5'-direction to yield nucleoside 5'-phosphates.. Functionally, bidirectionally degrades single-stranded DNA into large acid-insoluble oligonucleotides, which are then degraded further into small acid-soluble oligonucleotides. In Lactobacillus acidophilus (strain ATCC 700396 / NCK56 / N2 / NCFM), this protein is Exodeoxyribonuclease 7 small subunit.